The chain runs to 212 residues: Thymidylate kinase (212 aa).

11–18 (GPEGAGKT) is an ATP binding site.

It belongs to the thymidylate kinase family.

The enzyme catalyses dTMP + ATP = dTDP + ADP. In terms of biological role, phosphorylation of dTMP to form dTDP in both de novo and salvage pathways of dTTP synthesis. This is Thymidylate kinase from Streptococcus pneumoniae (strain ATCC 700669 / Spain 23F-1).